A 411-amino-acid chain; its full sequence is Protein Rv3035 (411 aa).

The protein is Protein Rv3035 of Mycobacterium tuberculosis (strain ATCC 25618 / H37Rv).